The following is a 490-amino-acid chain: Glutamyl-tRNA(Gln) amidotransferase subunit A (490 aa).

Active-site charge relay system residues include Lys-79 and Ser-154. Ser-178 functions as the Acyl-ester intermediate in the catalytic mechanism.

Belongs to the amidase family. GatA subfamily. As to quaternary structure, heterotrimer of A, B and C subunits.

It catalyses the reaction L-glutamyl-tRNA(Gln) + L-glutamine + ATP + H2O = L-glutaminyl-tRNA(Gln) + L-glutamate + ADP + phosphate + H(+). Functionally, allows the formation of correctly charged Gln-tRNA(Gln) through the transamidation of misacylated Glu-tRNA(Gln) in organisms which lack glutaminyl-tRNA synthetase. The reaction takes place in the presence of glutamine and ATP through an activated gamma-phospho-Glu-tRNA(Gln). The polypeptide is Glutamyl-tRNA(Gln) amidotransferase subunit A (Roseiflexus castenholzii (strain DSM 13941 / HLO8)).